We begin with the raw amino-acid sequence, 393 residues long: Biotin synthase, mitochondrial (393 aa).

The N-terminal 20 residues, 1 to 20 (MSVSFTRSFPRAFIRSYGTV), are a transit peptide targeting the mitochondrion. The region spanning 81–310 (SAIQMCTLMN…ATIVRLAAGR (230 aa)) is the Radical SAM core domain. [4Fe-4S] cluster contacts are provided by C96, C100, and C103. Positions 140, 173, 233, and 305 each coordinate [2Fe-2S] cluster. The segment at 366–393 (NAATPQQHVDSVAHESEKNPAAPAAEAL) is disordered.

This sequence belongs to the radical SAM superfamily. Biotin synthase family. Requires [4Fe-4S] cluster as cofactor. The cofactor is [2Fe-2S] cluster.

The protein localises to the mitochondrion. It carries out the reaction (4R,5S)-dethiobiotin + (sulfur carrier)-SH + 2 reduced [2Fe-2S]-[ferredoxin] + 2 S-adenosyl-L-methionine = (sulfur carrier)-H + biotin + 2 5'-deoxyadenosine + 2 L-methionine + 2 oxidized [2Fe-2S]-[ferredoxin]. It functions in the pathway cofactor biosynthesis; biotin biosynthesis; biotin from 7,8-diaminononanoate: step 2/2. Functionally, biotin synthase; part of the cluster involved in the biosynthesis of biotin (also known as vitamin B8 or vitamin H), a water-soluble vitamin that functions as a prosthetic group of many carboxylases, such as acetyl-CoA carboxylase and pyruvate carboxylase. Catalyzes the conversion of dethiobiotin (DTB) to biotin by the insertion of a sulfur atom into dethiobiotin via a radical-based mechanism. This chain is Biotin synthase, mitochondrial, found in Emericella nidulans (strain FGSC A4 / ATCC 38163 / CBS 112.46 / NRRL 194 / M139) (Aspergillus nidulans).